A 415-amino-acid chain; its full sequence is Polyketide biosynthesis malonyl-ACP decarboxylase PksF (415 aa).

A Ketosynthase family 3 (KS3) domain is found at 6 to 407 (LPEVVVTGVG…GMNTAVCIQN (402 aa)).

It belongs to the thiolase-like superfamily. Beta-ketoacyl-ACP synthases family.

It is found in the cytoplasm. The enzyme catalyses malonyl-[ACP] + H(+) = acetyl-[ACP] + CO2. Its pathway is antibiotic biosynthesis; bacillaene biosynthesis. Functionally, involved in some intermediate steps for the synthesis of the antibiotic polyketide bacillaene which is involved in secondary metabolism. It decarboxylates selectively the malonyl group attached on the acyl-carrier-protein AcpK (Mal-AcpK). This chain is Polyketide biosynthesis malonyl-ACP decarboxylase PksF (pksF), found in Bacillus subtilis (strain 168).